An 837-amino-acid chain; its full sequence is Protein translocase subunit SecA 1 (837 aa).

Residues Gln-85, 103 to 107 (GEGKT), and Asp-493 each bind ATP. Residues Cys-821, Cys-823, Cys-832, and His-833 each coordinate Zn(2+).

It belongs to the SecA family. Monomer and homodimer. Part of the essential Sec protein translocation apparatus which comprises SecA, SecYEG and auxiliary proteins SecDF. Other proteins may also be involved. Zn(2+) is required as a cofactor.

It localises to the cell membrane. It is found in the cytoplasm. The catalysed reaction is ATP + H2O + cellular proteinSide 1 = ADP + phosphate + cellular proteinSide 2.. Its function is as follows. Part of the Sec protein translocase complex. Interacts with the SecYEG preprotein conducting channel. Has a central role in coupling the hydrolysis of ATP to the transfer of proteins into and across the cell membrane, serving as an ATP-driven molecular motor driving the stepwise translocation of polypeptide chains across the membrane. The protein is Protein translocase subunit SecA 1 of Streptococcus pneumoniae serotype 4 (strain ATCC BAA-334 / TIGR4).